A 192-amino-acid polypeptide reads, in one-letter code: Transmembrane protein 276 (192 aa).

The signal sequence occupies residues 1–32; sequence MAPKPGAEWSTALSHLVLGVVSLHAAVSTAEA. The next 4 helical transmembrane spans lie at 35-55, 63-83, 89-109, and 114-134; these read GAAAGFLLQVLAATTTLAPGL, AGAWVATVIGLPLLAFDFHWV, SANLLLGGGMVLAVAGGHLGP, and VAGQAMLLVVAVTILIVAVFT.

The protein localises to the membrane. This is Transmembrane protein 276 from Homo sapiens (Human).